Reading from the N-terminus, the 152-residue chain is D-erythrulose-4-phosphate isomerase (152 aa).

Cysteine 67 (proton acceptor) is an active-site residue.

This sequence belongs to the LacAB/RpiB family.

It carries out the reaction D-erythrulose 4-phosphate = D-erythrose 4-phosphate. It functions in the pathway carbohydrate metabolism. Functionally, involved in catabolism of D-apiose. Catalyzes the isomerization of D-erythrulose 4-phosphate to D-erythrose 4-phosphate. This Pectobacterium atrosepticum (strain SCRI 1043 / ATCC BAA-672) (Erwinia carotovora subsp. atroseptica) protein is D-erythrulose-4-phosphate isomerase.